Here is a 356-residue protein sequence, read N- to C-terminus: Tyrosine recombinase XerS (356 aa).

A Core-binding (CB) domain is found at 16–121; it reads LMPWYVLEYY…ALSSLYKYLT (106 aa). Residues 169–354 form the Tyr recombinase domain; sequence GFLTYIDQEH…VNDEQKNALD (186 aa). Active-site residues include R210, K234, H306, R309, and H332. The active-site O-(3'-phospho-DNA)-tyrosine intermediate is the Y341.

It belongs to the 'phage' integrase family. XerS subfamily.

The protein resides in the cytoplasm. With respect to regulation, ftsK is required for recombination. Its function is as follows. Site-specific tyrosine recombinase, which acts by catalyzing the cutting and rejoining of the recombining DNA molecules. Essential to convert dimers of the bacterial chromosome into monomers to permit their segregation at cell division. The chain is Tyrosine recombinase XerS from Streptococcus pneumoniae serotype 2 (strain D39 / NCTC 7466).